A 210-amino-acid chain; its full sequence is Tetraspanin-31 (210 aa).

The Cytoplasmic portion of the chain corresponds to Met-1 to Ala-12. The helical transmembrane segment at Leu-13–Trp-33 threads the bilayer. Topologically, residues Ala-34 to His-44 are extracellular. A helical membrane pass occupies residues Ile-45–Val-65. Over Gly-66–Gln-72 the chain is Cytoplasmic. Residues Val-73–Ser-93 form a helical membrane-spanning segment. The Extracellular segment spans residues Cys-94–Lys-173. N-linked (GlcNAc...) asparagine glycans are attached at residues Asn-100, Asn-109, Asn-117, and Asn-134. Residues Ile-174–Met-194 form a helical membrane-spanning segment. Residues Arg-195 to Leu-210 are Cytoplasmic-facing.

It belongs to the tetraspanin (TM4SF) family.

It is found in the membrane. The chain is Tetraspanin-31 (TSPAN31) from Bos taurus (Bovine).